The sequence spans 232 residues: Ribosomal RNA large subunit methyltransferase E (232 aa).

S-adenosyl-L-methionine-binding residues include Gly-64, Trp-66, Asp-97, Asp-113, and Asp-138. Catalysis depends on Lys-178, which acts as the Proton acceptor.

It belongs to the class I-like SAM-binding methyltransferase superfamily. RNA methyltransferase RlmE family.

Its subcellular location is the cytoplasm. The enzyme catalyses uridine(2552) in 23S rRNA + S-adenosyl-L-methionine = 2'-O-methyluridine(2552) in 23S rRNA + S-adenosyl-L-homocysteine + H(+). Functionally, specifically methylates the uridine in position 2552 of 23S rRNA at the 2'-O position of the ribose in the fully assembled 50S ribosomal subunit. In Leptothrix cholodnii (strain ATCC 51168 / LMG 8142 / SP-6) (Leptothrix discophora (strain SP-6)), this protein is Ribosomal RNA large subunit methyltransferase E.